We begin with the raw amino-acid sequence, 291 residues long: Glycinyltransferase (291 aa).

Residue glutamate 243 is part of the active site.

The protein belongs to the thymidine aminotransferase family.

It catalyses the reaction 5-phosphomethyl-dUMP in DNA + glycine = 5-N(alpha)-glycyl-dTMP in DNA + phosphate. In terms of biological role, transfers glycine to 5-phosphomethyl-2'-deoxyuridine (5-PmdU) to produce 5-Nalpha-glycinylthymidine (Nalpha-GlyT) as a step in the pathway leading to thymidine hypermodifications in the viral genome. As a final result of the pathway of hypermodification, 5-aminoethyl-2'-deoxyuridine (5-NedU) substitutes for about 30% of thymidines in the viral DNA. These modifications probably prevent degradation of viral genome by the host restriction-modification antiviral defense system. This chain is Glycinyltransferase, found in Pseudomonas phage M6.